The following is a 264-amino-acid chain: Thymidylate synthase (264 aa).

A dUMP-binding site is contributed by arginine 21. Residue histidine 51 coordinates (6R)-5,10-methylene-5,6,7,8-tetrahydrofolate. DUMP is bound at residue 126-127 (RR). The active-site Nucleophile is cysteine 146. Residues 166 to 169 (RSAD), asparagine 177, and 207 to 209 (HIY) each bind dUMP. Aspartate 169 contributes to the (6R)-5,10-methylene-5,6,7,8-tetrahydrofolate binding site. Position 263 (serine 263) interacts with (6R)-5,10-methylene-5,6,7,8-tetrahydrofolate.

Belongs to the thymidylate synthase family. Bacterial-type ThyA subfamily. In terms of assembly, homodimer.

The protein resides in the cytoplasm. The catalysed reaction is dUMP + (6R)-5,10-methylene-5,6,7,8-tetrahydrofolate = 7,8-dihydrofolate + dTMP. It participates in pyrimidine metabolism; dTTP biosynthesis. Catalyzes the reductive methylation of 2'-deoxyuridine-5'-monophosphate (dUMP) to 2'-deoxythymidine-5'-monophosphate (dTMP) while utilizing 5,10-methylenetetrahydrofolate (mTHF) as the methyl donor and reductant in the reaction, yielding dihydrofolate (DHF) as a by-product. This enzymatic reaction provides an intracellular de novo source of dTMP, an essential precursor for DNA biosynthesis. In Bacillus pumilus (strain SAFR-032), this protein is Thymidylate synthase.